The primary structure comprises 517 residues: Crotonobetaine/carnitine--CoA ligase (517 aa).

This sequence belongs to the ATP-dependent AMP-binding enzyme family.

It catalyses the reaction 4-(trimethylamino)butanoate + ATP + CoA = 4-(trimethylamino)butanoyl-CoA + AMP + diphosphate. The enzyme catalyses crotonobetaine + ATP + CoA = crotonobetainyl-CoA + AMP + diphosphate. The catalysed reaction is (R)-carnitine + ATP + CoA = (R)-carnitinyl-CoA + AMP + diphosphate. It participates in amine and polyamine metabolism; carnitine metabolism. Its function is as follows. Catalyzes the transfer of CoA to carnitine, generating the initial carnitinyl-CoA needed for the CaiB reaction cycle. Also has activity toward crotonobetaine and gamma-butyrobetaine. The protein is Crotonobetaine/carnitine--CoA ligase of Shigella flexneri.